A 171-amino-acid chain; its full sequence is Secreted protein CSS3 (171 aa).

Residues 1–20 form the signal peptide; the sequence is MVPLFGLFCIFSQLYSLCSA. Asn37, Asn139, and Asn159 each carry an N-linked (GlcNAc...) asparagine glycan.

Its subcellular location is the cytoplasm. It localises to the secreted. The polypeptide is Secreted protein CSS3 (Saccharomyces cerevisiae (strain ATCC 204508 / S288c) (Baker's yeast)).